Here is a 55-residue protein sequence, read N- to C-terminus: MAKSNTVQIKLVSTADTGFFYVTKKNARAQTGKLEFRKYDPVVRKHVTFKEAKIK.

The protein belongs to the bacterial ribosomal protein bL33 family.

The sequence is that of Large ribosomal subunit protein bL33 from Granulibacter bethesdensis (strain ATCC BAA-1260 / CGDNIH1).